The following is a 62-amino-acid chain: Small ribosomal subunit protein bS21 (62 aa).

It belongs to the bacterial ribosomal protein bS21 family.

The protein is Small ribosomal subunit protein bS21 (rpsU) of Mycoplasma genitalium (strain ATCC 33530 / DSM 19775 / NCTC 10195 / G37) (Mycoplasmoides genitalium).